We begin with the raw amino-acid sequence, 111 residues long: Cell cycle protein GpsB (111 aa).

A coiled-coil region spans residues 38–72 (IKDYEAFHKEFEQLKQQNARLKRELEEQKLAVTQV).

It belongs to the GpsB family. Forms polymers through the coiled coil domains. Interacts with PBP1, MreC and EzrA.

The protein localises to the cytoplasm. Its function is as follows. Divisome component that associates with the complex late in its assembly, after the Z-ring is formed, and is dependent on DivIC and PBP2B for its recruitment to the divisome. Together with EzrA, is a key component of the system that regulates PBP1 localization during cell cycle progression. Its main role could be the removal of PBP1 from the cell pole after pole maturation is completed. Also contributes to the recruitment of PBP1 to the division complex. Not essential for septum formation. The protein is Cell cycle protein GpsB of Bacillus cereus (strain G9842).